A 391-amino-acid chain; its full sequence is Chorismate synthase (391 aa).

Residue Arg-48 participates in NADP(+) binding. Residues 126 to 128 (RAS), Gly-286, 301 to 305 (KPTSS), and Arg-328 each bind FMN.

This sequence belongs to the chorismate synthase family. FMNH2 serves as cofactor.

The catalysed reaction is 5-O-(1-carboxyvinyl)-3-phosphoshikimate = chorismate + phosphate. Its pathway is metabolic intermediate biosynthesis; chorismate biosynthesis; chorismate from D-erythrose 4-phosphate and phosphoenolpyruvate: step 7/7. In terms of biological role, catalyzes the anti-1,4-elimination of the C-3 phosphate and the C-6 proR hydrogen from 5-enolpyruvylshikimate-3-phosphate (EPSP) to yield chorismate, which is the branch point compound that serves as the starting substrate for the three terminal pathways of aromatic amino acid biosynthesis. This reaction introduces a second double bond into the aromatic ring system. This Saccharolobus islandicus (strain Y.N.15.51 / Yellowstone #2) (Sulfolobus islandicus) protein is Chorismate synthase.